The sequence spans 740 residues: Alpha-1,6-mannosylglycoprotein 6-beta-N-acetylglucosaminyltransferase A (740 aa).

Topologically, residues 1–13 (MAFFTPWKLSSQK) are cytoplasmic. Residues 14–30 (LGFFLVTFGFIWGMMLL) traverse the membrane as a helical; Signal-anchor for type II membrane protein segment. Residues 31 to 740 (HFTIQQRTQP…GQVALCKDCL (710 aa)) lie on the Lumenal side of the membrane. Residues N109, N114, and N117 are each glycosylated (N-linked (GlcNAc...) asparagine). Disulfide bonds link C144-C182, C155-C195, C171-C337, C371-C625, C648-C723, C652-C725, C659-C712, C680-C701, and C736-C739. The segment at 212–740 (NSLAEIRTDF…GQVALCKDCL (529 aa)) is sufficient for catalytic activity. N333 carries an N-linked (GlcNAc...) asparagine glycan. Residue 377–378 (DS) participates in substrate binding. N-linked (GlcNAc...) asparagine glycans are attached at residues N432 and N446. A UDP-N-acetyl-alpha-D-glucosamine-binding site is contributed by E525. K553 contacts substrate.

This sequence belongs to the glycosyltransferase 18 family. Post-translationally, N-glycosylated. In terms of processing, a secreted form is released from the membrane after cleavage by gamma-secretase.

The protein localises to the golgi apparatus membrane. Its subcellular location is the secreted. The enzyme catalyses N(4)-{beta-D-GlcNAc-(1-&gt;2)-[beta-D-GlcNAc-(1-&gt;4)]-alpha-D-Man-(1-&gt;3)-[beta-D-GlcNAc-(1-&gt;2)-alpha-D-Man-(1-&gt;6)]-beta-D-Man-(1-&gt;4)-beta-D-GlcNAc-(1-&gt;4)-beta-D-GlcNAc}-L-asparaginyl-[protein] + UDP-N-acetyl-alpha-D-glucosamine = N(4)-{beta-D-GlcNAc-(1-&gt;2)-[beta-D-GlcNAc-(1-&gt;4)]-alpha-D-Man-(1-&gt;3)-[beta-D-GlcNAc-(1-&gt;2)-[beta-D-GlcNAc-(1-&gt;6)]-alpha-D-Man-(1-&gt;6)]-beta-D-Man-(1-&gt;4)-beta-D-GlcNAc-(1-&gt;4)-beta-D-GlcNAc}-L-asparaginyl-[protein] + UDP + H(+). It functions in the pathway protein modification; protein glycosylation. Its function is as follows. Catalyzes the addition of N-acetylglucosamine (GlcNAc) in beta 1-6 linkage to the alpha-linked mannose of biantennary N-linked oligosaccharides. Catalyzes an important step in the biosynthesis of branched, complex-type N-glycans, such as those found on EGFR, TGFR (TGF-beta receptor) and CDH2. Via its role in the biosynthesis of complex N-glycans, plays an important role in the activation of cellular signaling pathways, reorganization of the actin cytoskeleton, cell-cell adhesion and cell migration. MGAT5-dependent EGFR N-glycosylation enhances the interaction between EGFR and LGALS3 and thereby prevents rapid EGFR endocytosis and prolongs EGFR signaling. Required for efficient interaction between TGFB1 and its receptor. Enhances activation of intracellular signaling pathways by several types of growth factors, including FGF2, PDGF, IGF, TGFB1 and EGF. MGAT5-dependent CDH2 N-glycosylation inhibits CDH2-mediated homotypic cell-cell adhesion and contributes to the regulation of downstream signaling pathways. Promotes cell migration. Contributes to the regulation of the inflammatory response. MGAT5-dependent TCR N-glycosylation enhances the interaction between TCR and LGALS3, limits agonist-induced TCR clustering, and thereby dampens TCR-mediated responses to antigens. Required for normal leukocyte evasation and accumulation at sites of inflammation. Inhibits attachment of monocytes to the vascular endothelium and subsequent monocyte diapedesis. In terms of biological role, promotes proliferation of umbilical vein endothelial cells and angiogenesis, at least in part by promoting the release of the growth factor FGF2 from the extracellular matrix. The protein is Alpha-1,6-mannosylglycoprotein 6-beta-N-acetylglucosaminyltransferase A (MGAT5) of Cricetulus griseus (Chinese hamster).